Consider the following 1018-residue polypeptide: Pleckstrin homology domain-containing family M member 2 (1018 aa).

Methionine 1 carries the N-acetylmethionine modification. Positions 1 to 289 (MEPREVKDRI…PDQPDACTEL (289 aa)) are interaction with KIF5B. One can recognise an RUN domain in the interval 36-158 (RNHDKVLQRL…IRFDLDLDAP (123 aa)). Disordered stretches follow at residues 210–367 (SAIA…SSEL), 407–440 (TWCS…SEGL), 452–520 (ESPS…DSQL), 526–545 (EPLV…EPGT), and 555–583 (DQPS…THPS). Low complexity predominate over residues 230 to 245 (STASDLTSSKTSTKSP). Residues 258–270 (ETASSDTTPVHTT) are compositionally biased toward polar residues. Residues 294 to 306 (VTKKKKIGKKKKT) are compositionally biased toward basic residues. Composition is skewed to polar residues over residues 316–325 (HPTSSQQKCG) and 347–367 (VLAS…SSEL). Residue serine 423 is modified to Phosphoserine. One can recognise a PH domain in the interval 770–872 (TITKEGMLHY…WMQHLCQAVS (103 aa)).

Interacts with KLC2 (via TPR repeats). Interacts with KIF5B. Interacts with BORCS5. Interacts (via RUN domain) with ARL8B (GTP-bound form); PLEKHM1 and PLEKHM2 compete for interaction with ARL8B. Interacts with ARL8A.

The protein resides in the cytoplasm. Its subcellular location is the lysosome membrane. Its function is as follows. Plays a role in lysosomes movement and localization at the cell periphery acting as an effector of ARL8B. Required for ARL8B to exert its effects on lysosome location, recruits kinesin-1 to lysosomes and hence direct their movement toward microtubule plus ends. Binding to ARL8B provides a link from lysosomal membranes to plus-end-directed motility. Critical factor involved in NK cell-mediated cytotoxicity. Drives the polarization of cytolytic granules and microtubule-organizing centers (MTOCs) toward the immune synapse between effector NK lymphocytes and target cells. Required for maintenance of the Golgi apparatus organization. May play a role in membrane tubulation. This Mus musculus (Mouse) protein is Pleckstrin homology domain-containing family M member 2.